A 48-amino-acid chain; its full sequence is DNA-directed RNA polymerase subunit Rpo12 (48 aa).

4 residues coordinate Zn(2+): C6, C9, C26, and C29.

This sequence belongs to the archaeal Rpo12/eukaryotic RPC10 RNA polymerase subunit family. As to quaternary structure, part of the 13-subunit RNA polymerase. The cofactor is Zn(2+).

Its subcellular location is the cytoplasm. It carries out the reaction RNA(n) + a ribonucleoside 5'-triphosphate = RNA(n+1) + diphosphate. In terms of biological role, DNA-dependent RNA polymerase (RNAP) catalyzes the transcription of DNA into RNA using the four ribonucleoside triphosphates as substrates. This Sulfolobus acidocaldarius (strain ATCC 33909 / DSM 639 / JCM 8929 / NBRC 15157 / NCIMB 11770) protein is DNA-directed RNA polymerase subunit Rpo12.